We begin with the raw amino-acid sequence, 292 residues long: Leucine-rich repeat-containing protein 10B (292 aa).

The tract at residues 1–20 (MGIAESTPDELPSDAEEQLR) is disordered. Acidic residues predominate over residues 7–16 (TPDELPSDAE). LRR repeat units lie at residues 22 to 43 (GDQQ…VCAL), 45 to 66 (RLQK…IEEL), 68 to 90 (ELRI…CRLP), 91 to 112 (RLTR…FAQL), 114 to 136 (SLRC…LRLV), 137 to 158 (ALQS…LPRM), 160 to 181 (GLRG…LLRM), 183 to 204 (RLHI…HPLR), and 205 to 226 (ALRV…ADTV). The segment at 236–261 (RMAERDEPTPRPPPRRPARAFEDEEE) is disordered.

This is Leucine-rich repeat-containing protein 10B (LRRC10B) from Homo sapiens (Human).